Consider the following 86-residue polypeptide: Small ribosomal subunit protein bS20 (86 aa).

Positions 1–26 (MANIKSAKKRALQSEKSRKHNASRRT) are disordered.

The protein belongs to the bacterial ribosomal protein bS20 family.

Binds directly to 16S ribosomal RNA. This is Small ribosomal subunit protein bS20 from Psychromonas ingrahamii (strain DSM 17664 / CCUG 51855 / 37).